The chain runs to 401 residues: G2/mitotic-specific cyclin-B1 (401 aa).

The protein belongs to the cyclin family. Cyclin AB subfamily. In terms of assembly, interacts with the CDK1 protein kinase to form a serine/threonine kinase holoenzyme complex also known as maturation promoting factor (MPF). The cyclin subunit imparts substrate specificity to the complex.

Functionally, essential for the control of the cell cycle at the G2/M (mitosis) transition. This is G2/mitotic-specific cyclin-B1 (ccnb1) from Oryzias luzonensis (Luzon ricefish).